Consider the following 2410-residue polypeptide: Dual specificity protein kinase splA (2410 aa).

6 disordered regions span residues 29–48 (NNNN…NNNN), 66–103 (NHPS…GELT), 116–158 (NTQT…SNGG), 187–252 (NISP…SSGI), 508–647 (QQLQ…VPSA), and 659–820 (SSSS…KKEG). Composition is skewed to low complexity over residues 116–128 (NTQT…TSPN) and 137–158 (NTTT…SNGG). The span at 514–525 (QPPPTIQPPPQQ) shows a compositional bias: pro residues. Residues 530-544 (LRGNRSSGNLSGLNS) show a composition bias toward low complexity. A compositionally biased stretch (polar residues) spans 545-554 (FSLKQSTDSL). A compositionally biased stretch (low complexity) spans 560–583 (SQQSTVSSNSTPIAATPISPLTAP). Over residues 584 to 594 (TSPPPPPPPPT) the composition is skewed to pro residues. Low complexity-rich tracts occupy residues 595–618 (NFNS…NTTV), 627–639 (VLPK…SPRP), 659–686 (SSSS…LNIS), 701–738 (SPSY…SPSV), 746–759 (ISPN…PNIS), and 777–813 (NTNN…NNTN). 2 consecutive B30.2/SPRY domains span residues 822–1004 (SSWF…GPFS) and 1020–1209 (DSGG…PPFK). Disordered stretches follow at residues 1228–1428 (PNGN…NNIY) and 1493–1512 (SLGV…PRKI). Low complexity-rich tracts occupy residues 1229–1359 (NGNN…NNNI), 1373–1399 (SSTG…NNSS), 1419–1428 (SSTNNNNNIY), and 1493–1507 (SLGV…SPKT). The 223-residue stretch at 1481–1703 (PITASTNHTL…CVATFPGGHF (223 aa)) folds into the B30.2/SPRY 3 domain. The SAM domain occupies 1734–1798 (WAPNDVAIWL…INRLNRMIQI (65 aa)). Positions 1862-2105 (KSYTQKEIED…PPPPPQLPVR (244 aa)) are disordered. A compositionally biased stretch (basic and acidic residues) spans 1865 to 1874 (TQKEIEDRNR). Low complexity predominate over residues 1951–1967 (SVSSTGGSSGFLTFPSS). The span at 1989 to 2002 (ITSNYKGITNTGQP) shows a compositional bias: polar residues. Residues 2020–2070 (SNNGNNGNNNNNNNNNNIKANQQQQQQSSYQQSQTQQQQQHITSTSTSTTN) are compositionally biased toward low complexity. Residues 2089 to 2102 (PSRPPPPPPPPPQL) show a composition bias toward pro residues. The 273-residue stretch at 2115–2387 (LEFGQTIGKG…FKQIIVHLKE (273 aa)) folds into the Protein kinase domain. ATP-binding positions include 2121 to 2129 (IGKGFFGEV) and Lys2142. Catalysis depends on Asp2243, which acts as the Proton acceptor.

This sequence belongs to the protein kinase superfamily. TKL Tyr protein kinase family. Tyrosine kinase domain is capable of autophosphorylation, in vitro; however it is also autophosphorylated on serine and threonine residues.

It catalyses the reaction L-tyrosyl-[protein] + ATP = O-phospho-L-tyrosyl-[protein] + ADP + H(+). Essential for spore differentiation. This is Dual specificity protein kinase splA (splA) from Dictyostelium discoideum (Social amoeba).